Reading from the N-terminus, the 90-residue chain is Molybdopterin synthase sulfur carrier subunit (90 aa).

Residue Gly90 is modified to 1-thioglycine; alternate. At Gly90 the chain carries Glycyl adenylate; alternate.

This sequence belongs to the MoaD family. MOCS2A subfamily. In terms of assembly, heterotetramer; composed of 2 small (Mocs2A) and 2 large (Mocs2B) subunits. In terms of processing, C-terminal thiocarboxylation occurs in 2 steps, it is first acyl-adenylated (-COAMP) via the hesA/moeB/thiF part of MOCS3, then thiocarboxylated (-COSH) via the rhodanese domain of MOCS3.

The protein localises to the cytoplasm. It functions in the pathway cofactor biosynthesis; molybdopterin biosynthesis. In terms of biological role, acts as a sulfur carrier required for molybdopterin biosynthesis. Component of the molybdopterin synthase complex that catalyzes the conversion of precursor Z into molybdopterin by mediating the incorporation of 2 sulfur atoms into precursor Z to generate a dithiolene group. In the complex, serves as sulfur donor by being thiocarboxylated (-COSH) at its C-terminus by MOCS3. After interaction with Mocs2B, the sulfur is then transferred to precursor Z to form molybdopterin. This chain is Molybdopterin synthase sulfur carrier subunit, found in Drosophila erecta (Fruit fly).